A 419-amino-acid polypeptide reads, in one-letter code: Ribosome biogenesis protein NOP53 (419 aa).

2 disordered regions span residues 1-21 and 233-283; these read MGIK…KNKR and KAFE…KIRQ. Basic and acidic residues predominate over residues 233 to 261; sequence KAFEDKGLVSDQDVNHSIDSDDQSEHEQA. Phosphoserine occurs at positions 242, 249, 252, and 256. The segment covering 269-283 has biased composition (basic residues); that stretch reads KNKRKTRSQRNKIRQ.

It belongs to the NOP53 family.

It localises to the nucleus. The protein resides in the nucleolus. It is found in the nucleoplasm. Functionally, may play a role in ribosome biogenesis. The protein is Ribosome biogenesis protein NOP53 of Schizosaccharomyces pombe (strain 972 / ATCC 24843) (Fission yeast).